The chain runs to 277 residues: MKGNIWTIGDVQGCCAPLAELLAHPEIAGDTDSRFWFAGDLVNRGPQSLAVLRRIMAMGERCTAVLGNHDLHLLAAYAGVRKPSKSDTLDEVLQAPDAVDLIDWLRFRPLAHYEAGHLMVHAGVLAKWDVAKTLALAGEVEQALRGPNWRKALQKMYGNEPATWKDDHTGGKRMRVIINALTRIRLCTPSGHMEFATKVAPGAWPAGLVPWFDVPNRATRDVTVVFGHWSTLGLLMRPDVICLDTGCVWGGALSALRLHDRKLVQVKCKRFQDPNGD.

This sequence belongs to the Ap4A hydrolase family.

The enzyme catalyses P(1),P(4)-bis(5'-adenosyl) tetraphosphate + H2O = 2 ADP + 2 H(+). Functionally, hydrolyzes diadenosine 5',5'''-P1,P4-tetraphosphate to yield ADP. In Bordetella pertussis (strain Tohama I / ATCC BAA-589 / NCTC 13251), this protein is Bis(5'-nucleosyl)-tetraphosphatase, symmetrical.